The following is a 485-amino-acid chain: NADH-quinone oxidoreductase subunit N (485 aa).

14 helical membrane passes run 8-28, 35-55, 75-95, 105-125, 127-147, 159-179, 203-223, 235-255, 271-291, 297-317, 326-346, 373-393, 408-427, and 449-469; these read LIALLPLLIVGLTVVVVMLSI, FVNATLAVVGLNLALFSLYFV, FYTGLVILASLATCTFAYPWL, FYLLVLIAALGGVVLASASHL, SLFIGIELISLPLFGLVGYAF, YTILSAAASSFLLFGMALVYA, LLAGLGLMIVGFGFKLSLVPF, PAPVSTFLATASKIAIFGVLM, TVLGIIAVASMLFGNLMAISQ, LLGYSSIAHLGYLLVALIAVQ, VGVYLAGYLFSSLGAFGVVSL, AAVMTVMMLSLAGIPMTLGFI, WWLTGAVVLGSAIGLYYYLR, and AFTAGGVVVLISAILVLVLGI.

The protein belongs to the complex I subunit 2 family. As to quaternary structure, NDH-1 is composed of 13 different subunits. Subunits NuoA, H, J, K, L, M, N constitute the membrane sector of the complex.

Its subcellular location is the cell inner membrane. The catalysed reaction is a quinone + NADH + 5 H(+)(in) = a quinol + NAD(+) + 4 H(+)(out). In terms of biological role, NDH-1 shuttles electrons from NADH, via FMN and iron-sulfur (Fe-S) centers, to quinones in the respiratory chain. The immediate electron acceptor for the enzyme in this species is believed to be ubiquinone. Couples the redox reaction to proton translocation (for every two electrons transferred, four hydrogen ions are translocated across the cytoplasmic membrane), and thus conserves the redox energy in a proton gradient. The chain is NADH-quinone oxidoreductase subunit N from Erwinia tasmaniensis (strain DSM 17950 / CFBP 7177 / CIP 109463 / NCPPB 4357 / Et1/99).